The chain runs to 913 residues: Valine--tRNA ligase (913 aa).

Residues 49-59 (PNVTGNLHLGH) carry the 'HIGH' region motif. The short motif at 544 to 548 (KMSKS) is the 'KMSKS' region element. An ATP-binding site is contributed by lysine 547. Residues 851 to 912 (DWVKKQQKRL…ERLEGVLAQL (62 aa)) are a coiled coil.

It belongs to the class-I aminoacyl-tRNA synthetase family. ValS type 1 subfamily. As to quaternary structure, monomer.

Its subcellular location is the cytoplasm. It carries out the reaction tRNA(Val) + L-valine + ATP = L-valyl-tRNA(Val) + AMP + diphosphate. Catalyzes the attachment of valine to tRNA(Val). As ValRS can inadvertently accommodate and process structurally similar amino acids such as threonine, to avoid such errors, it has a 'posttransfer' editing activity that hydrolyzes mischarged Thr-tRNA(Val) in a tRNA-dependent manner. This Deinococcus radiodurans (strain ATCC 13939 / DSM 20539 / JCM 16871 / CCUG 27074 / LMG 4051 / NBRC 15346 / NCIMB 9279 / VKM B-1422 / R1) protein is Valine--tRNA ligase.